Reading from the N-terminus, the 1246-residue chain is Respiratory nitrate reductase 2 alpha chain (1246 aa).

One can recognise a 4Fe-4S Mo/W bis-MGD-type domain in the interval 43-107 (DKIVRSTHGV…SYSWYLYSAN (65 aa)). [4Fe-4S] cluster is bound by residues His50, Cys54, Cys58, and Cys93. Position 223 (Asp223) interacts with Mo-bis(molybdopterin guanine dinucleotide).

The protein belongs to the prokaryotic molybdopterin-containing oxidoreductase family. Tetramer composed of an alpha, a beta and 2 gamma chains. Alpha and beta are catalytic chains; gamma chain is involved in binding the enzyme complex to the cytoplasmic membrane. [4Fe-4S] cluster is required as a cofactor. Mo-bis(molybdopterin guanine dinucleotide) serves as cofactor.

The protein resides in the cell membrane. It carries out the reaction nitrate + a quinol = a quinone + nitrite + H2O. Functionally, this is a second nitrate reductase enzyme which can substitute for the NRA enzyme and allows E.coli to use nitrate as an electron acceptor during anaerobic growth. The alpha chain is the actual site of nitrate reduction. This Escherichia coli (strain K12) protein is Respiratory nitrate reductase 2 alpha chain (narZ).